Reading from the N-terminus, the 79-residue chain is ATP synthase subunit beta (79 aa).

It belongs to the ATPase alpha/beta chains family. In terms of assembly, F-type ATPases have 2 components, CF(1) - the catalytic core - and CF(0) - the membrane proton channel. CF(1) has five subunits: alpha(3), beta(3), gamma(1), delta(1), epsilon(1). CF(0) has three main subunits: a(1), b(2) and c(9-12). The alpha and beta chains form an alternating ring which encloses part of the gamma chain. CF(1) is attached to CF(0) by a central stalk formed by the gamma and epsilon chains, while a peripheral stalk is formed by the delta and b chains.

It localises to the cell membrane. It catalyses the reaction ATP + H2O + 4 H(+)(in) = ADP + phosphate + 5 H(+)(out). In terms of biological role, produces ATP from ADP in the presence of a proton gradient across the membrane. The catalytic sites are hosted primarily by the beta subunits. The sequence is that of ATP synthase subunit beta (atpD) from Streptococcus downei (Streptococcus sobrinus).